A 250-amino-acid chain; its full sequence is Kv channel-interacting protein 4 (250 aa).

The tract at residues 2-44 (NVRRVESISAQLEEASSTGGFLYAQNSTKRSIKERLMKLLPCS) is KIS. 2 positions are modified to phosphoserine: Ser-17 and Ser-56. The 57-residue stretch at 61 to 117 (LEMATVRHRPEALELLEAQSKFTKKELQILYRGFKNECPSGVVNEETFKEIYSQFFP) folds into the EF-hand 1; degenerate domain. 3 EF-hand domains span residues 120-155 (DSTT…LLRG), 156-191 (TVQE…IYDM), and 204-239 (APRQ…DENI). Ca(2+) is bound by residues Asp-133, Asp-135, Asn-137, Asp-144, Asp-169, Asn-171, Asp-173, Tyr-175, Glu-180, Asp-217, Asn-219, Asp-221, and Glu-228. Positions 237–250 (ENIMRSMQLFENVI) are interaction with KCND2.

The protein belongs to the recoverin family. As to quaternary structure, component of heteromultimeric potassium channels. Identified in potassium channel complexes containing KCND1, KCND2, KCND3, KCNIP1, KCNIP2, KCNIP3, KCNIP4, DPP6 and DPP10. Interacts with KCND2. Interacts with KCND3. Interacts with the C-terminus of PSEN2 and probably PSEN1.

The protein localises to the cell membrane. It localises to the cytoplasm. The protein resides in the peroxisome. Regulatory subunit of Kv4/D (Shal)-type voltage-gated rapidly inactivating A-type potassium channels. Modulates KCND2 channel density, inactivation kinetics and rate of recovery from inactivation in a calcium-dependent and isoform-specific manner. Modulates KCND3/Kv4.3 currents. Isoform 4 does not increase KCND2 expression at the cell membrane. Isoform 4 retains KCND3 in the endoplasmic reticulum and negatively regulates its expression at the cell membrane. This is Kv channel-interacting protein 4 (KCNIP4) from Macaca fascicularis (Crab-eating macaque).